Consider the following 496-residue polypeptide: Lysine--tRNA ligase (496 aa).

Residues E409 and E416 each coordinate Mg(2+).

Belongs to the class-II aminoacyl-tRNA synthetase family. As to quaternary structure, homodimer. Mg(2+) is required as a cofactor.

The protein resides in the cytoplasm. The enzyme catalyses tRNA(Lys) + L-lysine + ATP = L-lysyl-tRNA(Lys) + AMP + diphosphate. The chain is Lysine--tRNA ligase from Streptococcus pneumoniae (strain Hungary19A-6).